A 160-amino-acid chain; its full sequence is MRALYPGSFDPLTLGHLDLIERGCSLFGEVVVAVLQNPGKSPAFSLDQRLEQITQATSHLQGVTVTSFNGLTVNCAREHHAQLILRGLRAMSDFEYELQIAHTNRSLDSEFETIFLSTAAHYSFLSSSVVKEVARFGGRVEHMVPAVVAEDLKRFFNSAL.

Residue Ser-8 participates in substrate binding. ATP is bound by residues 8–9 and His-16; that span reads SF. Lys-40, Thr-72, and Arg-86 together coordinate substrate. ATP is bound by residues 87–89, Glu-97, and 122–128; these read GLR and YSFLSSS.

This sequence belongs to the bacterial CoaD family. Homohexamer. Requires Mg(2+) as cofactor.

It localises to the cytoplasm. It catalyses the reaction (R)-4'-phosphopantetheine + ATP + H(+) = 3'-dephospho-CoA + diphosphate. The protein operates within cofactor biosynthesis; coenzyme A biosynthesis; CoA from (R)-pantothenate: step 4/5. Its function is as follows. Reversibly transfers an adenylyl group from ATP to 4'-phosphopantetheine, yielding dephospho-CoA (dPCoA) and pyrophosphate. The chain is Phosphopantetheine adenylyltransferase from Synechococcus sp. (strain CC9311).